The following is a 739-amino-acid chain: Catalase-peroxidase (739 aa).

The interval 1-20 is disordered; the sequence is MGSNECPYSRQNANIGGGGQ. The tryptophyl-tyrosyl-methioninium (Trp-Tyr) (with M-243) cross-link spans 94-217; it reads WHSAGTYRVF…LAASHMGLIY (124 aa). The active-site Proton acceptor is the His95. A cross-link (tryptophyl-tyrosyl-methioninium (Tyr-Met) (with W-94)) is located at residues 217 to 243; that stretch reads YVNPEGPNKNPDPVLAAKDIRITFGRM. Heme b is bound at residue His258.

Belongs to the peroxidase family. Peroxidase/catalase subfamily. In terms of assembly, homodimer or homotetramer. The cofactor is heme b. Post-translationally, formation of the three residue Trp-Tyr-Met cross-link is important for the catalase, but not the peroxidase activity of the enzyme.

It localises to the cytoplasm. The catalysed reaction is H2O2 + AH2 = A + 2 H2O. It catalyses the reaction 2 H2O2 = O2 + 2 H2O. Its function is as follows. Bifunctional enzyme with both catalase and broad-spectrum peroxidase activity. This is Catalase-peroxidase from Emericella nidulans (strain FGSC A4 / ATCC 38163 / CBS 112.46 / NRRL 194 / M139) (Aspergillus nidulans).